Reading from the N-terminus, the 313-residue chain is Protein TIC 22-like, chloroplastic (313 aa).

The transit peptide at 1-96 (MNSNIFPPSK…RISDDGGGAR (96 aa)) directs the protein to the chloroplast.

The protein belongs to the Tic22 family.

It is found in the plastid. The protein resides in the chloroplast intermembrane space. Involved in protein precursor import into chloroplasts. The chain is Protein TIC 22-like, chloroplastic (TIC22L) from Arabidopsis thaliana (Mouse-ear cress).